The primary structure comprises 456 residues: Iroquois-class homeodomain protein irx-2 (456 aa).

Residues 110–172 constitute a DNA-binding region (homeobox; TALE-type); it reads DPAYRKNATR…NARRRLKKEN (63 aa). Disordered stretches follow at residues 172–214, 246–320, and 434–456; these read NKMT…AEDE, CESG…PASK, and RPTN…QPYP. Basic and acidic residues-rich tracts occupy residues 192 to 205 and 246 to 256; these read GERV…KAQD and CESGSESKEKY. Acidic residues predominate over residues 257 to 269; sequence DDDEDEEEGDEED. The segment covering 291–318 has biased composition (polar residues); the sequence is NHQQDGSPRNSNKTSLDNGMSPSSQTPA.

This sequence belongs to the TALE/IRO homeobox family. Expressed in the neural plate in overlapping patterns with other irx members, which all share an anterior border of expression. Also expressed in the placodes. Broadly expressed in the tailbud rhombencephalon (hindbrain). Outside the nervous system and at tailbud stages, expressed in the developing otic vesicle, branchial arches, prospective heart region and pronephros.

The protein localises to the nucleus. Functionally, acts partially redundantly with other irx members in neural patterning. Required for formation of the posterior forebrain, midbrain, hindbrain, and to a lesser extent, spinal cord. Acts early in neural plate development to induce expression of some but not all proneural genes, and specify a neural precursor state. Also up-regulates repressors that prevent neuronal differentiation. Patterns the neuroectoderm in both the anterior/posterior and dorsal/ventral axes. Probably dispensable for pronephric kidney development. This chain is Iroquois-class homeodomain protein irx-2, found in Xenopus tropicalis (Western clawed frog).